The sequence spans 199 residues: Chaperone protein TorD (199 aa).

The protein belongs to the TorD/DmsD family. TorD subfamily.

It is found in the cytoplasm. Functionally, involved in the biogenesis of TorA. Acts on TorA before the insertion of the molybdenum cofactor and, as a result, probably favors a conformation of the apoenzyme that is competent for acquiring the cofactor. The protein is Chaperone protein TorD of Escherichia coli O81 (strain ED1a).